Consider the following 427-residue polypeptide: Serine--tRNA ligase (427 aa).

231-233 (TAE) contributes to the L-serine binding site. 262-264 (RSE) contacts ATP. Glutamate 285 contributes to the L-serine binding site. 349 to 352 (EISS) lines the ATP pocket. Residue serine 385 participates in L-serine binding.

The protein belongs to the class-II aminoacyl-tRNA synthetase family. Type-1 seryl-tRNA synthetase subfamily. As to quaternary structure, homodimer. The tRNA molecule binds across the dimer.

It localises to the cytoplasm. It catalyses the reaction tRNA(Ser) + L-serine + ATP = L-seryl-tRNA(Ser) + AMP + diphosphate + H(+). The catalysed reaction is tRNA(Sec) + L-serine + ATP = L-seryl-tRNA(Sec) + AMP + diphosphate + H(+). It participates in aminoacyl-tRNA biosynthesis; selenocysteinyl-tRNA(Sec) biosynthesis; L-seryl-tRNA(Sec) from L-serine and tRNA(Sec): step 1/1. Catalyzes the attachment of serine to tRNA(Ser). Is also able to aminoacylate tRNA(Sec) with serine, to form the misacylated tRNA L-seryl-tRNA(Sec), which will be further converted into selenocysteinyl-tRNA(Sec). The polypeptide is Serine--tRNA ligase (Rhizobium etli (strain CIAT 652)).